We begin with the raw amino-acid sequence, 236 residues long: Pyridoxine 5'-phosphate synthase (236 aa).

Asparagine 7 is a 3-amino-2-oxopropyl phosphate binding site. A 1-deoxy-D-xylulose 5-phosphate-binding site is contributed by 9–10 (DH). A 3-amino-2-oxopropyl phosphate-binding site is contributed by arginine 18. Histidine 43 (proton acceptor) is an active-site residue. 1-deoxy-D-xylulose 5-phosphate-binding residues include arginine 45 and histidine 50. Glutamate 69 serves as the catalytic Proton acceptor. 1-deoxy-D-xylulose 5-phosphate is bound at residue threonine 99. The Proton donor role is filled by histidine 190. 3-amino-2-oxopropyl phosphate-binding positions include glycine 191 and 212–213 (GH).

This sequence belongs to the PNP synthase family. Homooctamer; tetramer of dimers.

It localises to the cytoplasm. It carries out the reaction 3-amino-2-oxopropyl phosphate + 1-deoxy-D-xylulose 5-phosphate = pyridoxine 5'-phosphate + phosphate + 2 H2O + H(+). The protein operates within cofactor biosynthesis; pyridoxine 5'-phosphate biosynthesis; pyridoxine 5'-phosphate from D-erythrose 4-phosphate: step 5/5. Its function is as follows. Catalyzes the complicated ring closure reaction between the two acyclic compounds 1-deoxy-D-xylulose-5-phosphate (DXP) and 3-amino-2-oxopropyl phosphate (1-amino-acetone-3-phosphate or AAP) to form pyridoxine 5'-phosphate (PNP) and inorganic phosphate. The polypeptide is Pyridoxine 5'-phosphate synthase (Desulfosudis oleivorans (strain DSM 6200 / JCM 39069 / Hxd3) (Desulfococcus oleovorans)).